The following is an 82-amino-acid chain: Sec-independent protein translocase protein TatA (82 aa).

Residues 1–21 (MGSLSIWHWLIVGAVVLLVFG) form a helical membrane-spanning segment. Residues 43–82 (GLSEDEEKAEAKPVGEPSLRSLDHQGAGDPLKTPDARKIG) are disordered.

The protein belongs to the TatA/E family. As to quaternary structure, the Tat system comprises two distinct complexes: a TatABC complex, containing multiple copies of TatA, TatB and TatC subunits, and a separate TatA complex, containing only TatA subunits. Substrates initially bind to the TatABC complex, which probably triggers association of the separate TatA complex to form the active translocon.

Its subcellular location is the cell inner membrane. Part of the twin-arginine translocation (Tat) system that transports large folded proteins containing a characteristic twin-arginine motif in their signal peptide across membranes. TatA could form the protein-conducting channel of the Tat system. The sequence is that of Sec-independent protein translocase protein TatA from Methylocella silvestris (strain DSM 15510 / CIP 108128 / LMG 27833 / NCIMB 13906 / BL2).